The sequence spans 331 residues: Probable allantoicase (331 aa).

The protein belongs to the allantoicase family.

It catalyses the reaction allantoate + H2O = (S)-ureidoglycolate + urea. Its pathway is nitrogen metabolism; (S)-allantoin degradation; (S)-ureidoglycolate from allantoate (aminidohydrolase route): step 1/1. The sequence is that of Probable allantoicase from Stutzerimonas stutzeri (strain A1501) (Pseudomonas stutzeri).